The following is a 409-amino-acid chain: Pleckstrin homology domain-containing family O member 1 (409 aa).

Positions 1–24 (MMKKNNSAKRGPQDGNQQPAPPEK) are disordered. A PH domain is found at 21 to 132 (PPEKVGWVRK…WINALNSAIT (112 aa)). An interaction with capping proteins (CPs) region spans residues 133-193 (RAKNRILDEV…MLTLDLIQEE (61 aa)). The tract at residues 136–308 (NRILDEVTVE…LPNPGQLSRI (173 aa)) is interaction with ATM, CKIP, IFP35 and NMI. A disordered region spans residues 218–267 (LAGSRRRADSDRIQPSADRASSLSRPWEKTDKGATYTPQAPKKLTPTEKG). Phosphoserine occurs at positions 227 and 271. The segment at 308 to 409 (IQDLVARKLE…PHSQYRKSLM (102 aa)) is negative regulator of AP-1 activity. Disordered regions lie at residues 325 to 350 (EVQG…ESEQ) and 390 to 409 (TPDS…KSLM). Over residues 331–340 (DGKRKAKDPP) the composition is skewed to basic and acidic residues. Position 342 is a phosphoserine (S342). Polar residues predominate over residues 390-402 (TPDSHLRQTTPHS).

In terms of assembly, heterodimer or homodimer. Interacts with CK2 and actin capping subunits (capping protein CP-alpha and CP-beta). CKIP1 and CK2 together inhibit the activity of actin capping protein at the barbed ends of actin filaments. Interacts with ATM, IFP35, JUN, JUND, NMI and PI3K. Interacts with AKT1, AKT2 and AKT3 (each isozyme of PKB), PtdIns(3,5)P2, PtdIns(4,5)P2 and PtdIns(3,4,5)P2. In terms of processing, C-terminal fragments could be released during apoptosis via caspase-3-dependent cleavage. As to expression, abundantly expressed in skeletal muscle and heart, moderately in kidney, liver, brain and placenta and sparingly in the pancreas and lung. Easily detectable in cell lines such as MOLT-4, HEK293 and Jurkat.

It localises to the cell membrane. The protein localises to the nucleus. The protein resides in the cytoplasm. Functionally, plays a role in the regulation of the actin cytoskeleton through its interactions with actin capping protein (CP). May function to target CK2 to the plasma membrane thereby serving as an adapter to facilitate the phosphorylation of CP by protein kinase 2 (CK2). Appears to target ATM to the plasma membrane. Appears to also inhibit tumor cell growth by inhibiting AKT-mediated cell-survival. Also implicated in PI3K-regulated muscle differentiation, the regulation of AP-1 activity (plasma membrane bound AP-1 regulator that translocates to the nucleus) and the promotion of apoptosis induced by tumor necrosis factor TNF. When bound to PKB, it inhibits it probably by decreasing PKB level of phosphorylation. This chain is Pleckstrin homology domain-containing family O member 1 (PLEKHO1), found in Homo sapiens (Human).